The sequence spans 563 residues: Chaperonin GroEL 1 (563 aa).

Residues 29-32 (TIGP), 86-90 (DGTTT), G413, 476-478 (NAA), and D492 each bind ATP. The interval 520–545 (DKPEPPSPAGGEGGGDPMGGMGGMGG) is disordered. Over residues 529 to 545 (GGEGGGDPMGGMGGMGG) the composition is skewed to gly residues.

It belongs to the chaperonin (HSP60) family. Forms a cylinder of 14 subunits composed of two heptameric rings stacked back-to-back. Interacts with the co-chaperonin GroES.

It localises to the cytoplasm. The enzyme catalyses ATP + H2O + a folded polypeptide = ADP + phosphate + an unfolded polypeptide.. Its function is as follows. Together with its co-chaperonin GroES, plays an essential role in assisting protein folding. The GroEL-GroES system forms a nano-cage that allows encapsulation of the non-native substrate proteins and provides a physical environment optimized to promote and accelerate protein folding. The polypeptide is Chaperonin GroEL 1 (Prochlorococcus marinus (strain SARG / CCMP1375 / SS120)).